A 550-amino-acid chain; its full sequence is Hydroxylamine reductase (550 aa).

[2Fe-2S] cluster is bound by residues Cys-3, Cys-6, Cys-18, and Cys-25. 8 residues coordinate hybrid [4Fe-2O-2S] cluster: His-249, Glu-273, Cys-317, Cys-405, Cys-433, Cys-458, Glu-492, and Lys-494. Cys-405 bears the Cysteine persulfide mark.

It belongs to the HCP family. The cofactor is [2Fe-2S] cluster. It depends on hybrid [4Fe-2O-2S] cluster as a cofactor.

It is found in the cytoplasm. The catalysed reaction is A + NH4(+) + H2O = hydroxylamine + AH2 + H(+). Catalyzes the reduction of hydroxylamine to form NH(3) and H(2)O. The protein is Hydroxylamine reductase of Escherichia fergusonii (strain ATCC 35469 / DSM 13698 / CCUG 18766 / IAM 14443 / JCM 21226 / LMG 7866 / NBRC 102419 / NCTC 12128 / CDC 0568-73).